Here is a 664-residue protein sequence, read N- to C-terminus: tRNA uridine 5-carboxymethylaminomethyl modification enzyme MnmG (664 aa).

Residues glycine 14–glycine 19, valine 126, and serine 183 contribute to the FAD site. Residue glycine 277 to phenylalanine 291 participates in NAD(+) binding. Position 374 (glutamine 374) interacts with FAD.

Belongs to the MnmG family. As to quaternary structure, homodimer. Heterotetramer of two MnmE and two MnmG subunits. FAD serves as cofactor.

Its subcellular location is the cytoplasm. In terms of biological role, NAD-binding protein involved in the addition of a carboxymethylaminomethyl (cmnm) group at the wobble position (U34) of certain tRNAs, forming tRNA-cmnm(5)s(2)U34. The protein is tRNA uridine 5-carboxymethylaminomethyl modification enzyme MnmG of Salinibacter ruber (strain DSM 13855 / M31).